Here is a 616-residue protein sequence, read N- to C-terminus: Pentatricopeptide repeat-containing protein At4g15720 (616 aa).

10 PPR repeats span residues 63 to 93 (DTFT…MCEP), 94 to 128 (NVVS…RPVP), 130 to 164 (NEYT…GLRR), 165 to 199 (NIVV…GRNV), 200 to 228 (VSWT…FNAA), 235 to 269 (NQFM…GYES), 270 to 300 (NTVV…IRCH), 301 to 335 (SVIS…RINP), 336 to 371 (NYVT…GVVP), and 372 to 402 (DSRH…IEVG). The type E motif stretch occupies residues 409–484 (LWGALLSAGR…ERACSWIENK (76 aa)). Positions 485–515 (DSVYVFHAGDLSCDESGEIERFLKDLEKRMK) are type E(+) motif. The tract at residues 522–616 (SSSMITTSSS…NGSCTCRDYW (95 aa)) is type DYW motif.

It belongs to the PPR family. PCMP-H subfamily.

In Arabidopsis thaliana (Mouse-ear cress), this protein is Pentatricopeptide repeat-containing protein At4g15720 (PCMP-H1).